A 587-amino-acid polypeptide reads, in one-letter code: Potassium-transporting ATPase potassium-binding subunit (587 aa).

The next 4 membrane-spanning stretches (helical) occupy residues 1 to 21 (MSTS…LWVT), 60 to 80 (PVYA…LYLL), 89 to 109 (LNLG…VSFM), and 131 to 151 (GLAV…IAVV). Positions 162 to 188 (AVGGPGGPNGPGGPGGPNGPGAGSRDD) are disordered. The segment covering 164–183 (GGPGGPNGPGGPGGPNGPGA) has biased composition (gly residues). The next 7 helical transmembrane spans lie at 208 to 228 (IRIL…GGAI), 280 to 300 (PTSW…FSLP), 314 to 334 (LAIV…NAAF), 409 to 429 (GLYG…LMIG), 449 to 469 (LYFL…MGLP), 514 to 534 (ALGL…LGMA), and 557 to 577 (FAGM…FPAL).

Belongs to the KdpA family. As to quaternary structure, the system is composed of three essential subunits: KdpA, KdpB and KdpC.

It is found in the cell membrane. Its function is as follows. Part of the high-affinity ATP-driven potassium transport (or Kdp) system, which catalyzes the hydrolysis of ATP coupled with the electrogenic transport of potassium into the cytoplasm. This subunit binds the extracellular potassium ions and delivers the ions to the membrane domain of KdpB through an intramembrane tunnel. The polypeptide is Potassium-transporting ATPase potassium-binding subunit (Frankia alni (strain DSM 45986 / CECT 9034 / ACN14a)).